Reading from the N-terminus, the 409-residue chain is NADH-quinone oxidoreductase subunit D (409 aa).

It belongs to the complex I 49 kDa subunit family. In terms of assembly, NDH-1 is composed of 14 different subunits. Subunits NuoB, C, D, E, F, and G constitute the peripheral sector of the complex.

The protein resides in the cell inner membrane. It carries out the reaction a quinone + NADH + 5 H(+)(in) = a quinol + NAD(+) + 4 H(+)(out). NDH-1 shuttles electrons from NADH, via FMN and iron-sulfur (Fe-S) centers, to quinones in the respiratory chain. The immediate electron acceptor for the enzyme in this species is believed to be ubiquinone. Couples the redox reaction to proton translocation (for every two electrons transferred, four hydrogen ions are translocated across the cytoplasmic membrane), and thus conserves the redox energy in a proton gradient. In Helicobacter pylori (strain G27), this protein is NADH-quinone oxidoreductase subunit D.